We begin with the raw amino-acid sequence, 336 residues long: Heme A synthase (336 aa).

The next 8 membrane-spanning stretches (helical) occupy residues Leu-12–Leu-32, Leu-97–Phe-117, Ile-130–Ile-150, Ser-161–Ile-181, Leu-194–Ser-214, Phe-256–Tyr-276, Tyr-285–Ile-305, and Ile-310–Ile-330. His-258 provides a ligand contact to heme. Position 316 (His-316) interacts with heme.

Belongs to the COX15/CtaA family. Type 2 subfamily. In terms of assembly, interacts with CtaB. Heme b is required as a cofactor.

The protein resides in the cell membrane. The catalysed reaction is Fe(II)-heme o + 2 A + H2O = Fe(II)-heme a + 2 AH2. It participates in porphyrin-containing compound metabolism; heme A biosynthesis; heme A from heme O: step 1/1. Functionally, catalyzes the conversion of heme O to heme A by two successive hydroxylations of the methyl group at C8. The first hydroxylation forms heme I, the second hydroxylation results in an unstable dihydroxymethyl group, which spontaneously dehydrates, resulting in the formyl group of heme A. This is Heme A synthase from Pelagibacter ubique (strain HTCC1062).